The primary structure comprises 204 residues: Urease accessory protein UreG (204 aa).

A GTP-binding site is contributed by 13 to 20 (GPVGSGKT).

It belongs to the SIMIBI class G3E GTPase family. UreG subfamily. In terms of assembly, homodimer. UreD, UreF and UreG form a complex that acts as a GTP-hydrolysis-dependent molecular chaperone, activating the urease apoprotein by helping to assemble the nickel containing metallocenter of UreC. The UreE protein probably delivers the nickel.

It localises to the cytoplasm. Its function is as follows. Facilitates the functional incorporation of the urease nickel metallocenter. This process requires GTP hydrolysis, probably effectuated by UreG. The polypeptide is Urease accessory protein UreG (Acinetobacter baylyi (strain ATCC 33305 / BD413 / ADP1)).